A 568-amino-acid polypeptide reads, in one-letter code: MWRMTTLLHLTALLVLIPLCHCASMHRHDHYMDMDQTYPNGLGYCEPSGESSCKAGFSYNRDICQGPYHWHTISSCYKACGHKRRQSPINIWSHKAVFLPYLPRLKFKPHMKSLDTDVTNHQNRAPEFEPEDGDKLHVKLKNLVDGHYKFHNLHIHNGKSRRKGSEHSVNRHFTPMEAHLVFHHDDKKEIKPPRVKLGGVYAGRNKFVVVGVFLEVGDEGYGDEPDDDECKRILKGHCENNGDNGNNCDNGNNGNNDNNGNNGNNGNGNNGYNGNNGDNGNNGNGNGNNGYNGNNGYNGNNGNNGNGNNDNNGNDNNGNNGGNGNNGNNGNGNNGNNGNGNNGNNGGNGNNGNNGNSNNGNNGNGNNGNNGGNGNNGNNGNGNNENNGNGSNGNNGGNGNNGNNGDNGNGDNGYNGDNGNSDGRLRRWDLANVRRMHAERYHFSGGCIVKKAKRLSRILECAYRHKKVREFKRNGEEKGLDVDITPEMVLPPMKYRHYYTYEGSLTTPPCNETVLWVVEKCHVQVSRRVLDALRNVEGYEDGTTLSKYGTRRPTQRNKHPLRVYKNSI.

The signal sequence occupies residues 1–22 (MWRMTTLLHLTALLVLIPLCHC). An Alpha-carbonic anhydrase domain is found at 55-567 (AGFSYNRDIC…KHPLRVYKNS (513 aa)). Zn(2+)-binding residues include histidine 154, histidine 156, and histidine 179. The tract at residues 259–421 (NGNNGNNGNG…NGYNGDNGNS (163 aa)) is disordered. Gly residues predominate over residues 280–290 (GNNGNGNGNNG). Over residues 291–318 (YNGNNGYNGNNGNNGNGNNDNNGNDNNG) the composition is skewed to low complexity. Composition is skewed to gly residues over residues 319–352 (NNGG…GNNG) and 362–380 (NGNG…GNNG). N-linked (GlcNAc...) asparagine glycosylation is present at asparagine 389. Positions 390–413 (GSNGNNGGNGNNGNNGDNGNGDNG) are enriched in gly residues. 506–507 (TT) is a substrate binding site. N-linked (GlcNAc...) asparagine glycosylation is present at asparagine 511.

This sequence belongs to the alpha-carbonic anhydrase family. Homooligomer; disulfide-linked. May also be disulfide-linked to insoluble organic matrix. The cofactor is Zn(2+). Expressed in both the dorsal region of the mantle and the mantle edge. Is dispersed in calcium carbonate and also linked by disulfide bonds to the organic core of nacre.

Its subcellular location is the secreted. It is found in the extracellular space. The protein resides in the extracellular matrix. The enzyme catalyses hydrogencarbonate + H(+) = CO2 + H2O. In terms of biological role, acts as a negative regulator for calcification in the shells of mollusks. May function both as a calcium concentrator and as a carbonic anhydrase required for production of carbonate ions, which are assembled to CaCO(3) at mineralization sites. Is important for shell formation in both the calcitic prismatic layer and the aragonitic nacreous layer. In Pinctada maxima (Silver-lipped pearl oyster), this protein is N66 matrix protein.